A 510-amino-acid polypeptide reads, in one-letter code: Maturase K (510 aa).

Belongs to the intron maturase 2 family. MatK subfamily.

It localises to the plastid. Usually encoded in the trnK tRNA gene intron. Probably assists in splicing its own and other chloroplast group II introns. The sequence is that of Maturase K from Aneura mirabilis (Parasitic liverwort).